The chain runs to 142 residues: Type II secretion system core protein G (142 aa).

The propeptide at 1–8 (MRRQSQRG) is leader sequence. F9 bears the N-methylphenylalanine mark. The helical transmembrane segment at 9-29 (FTLLEIMVVIVIMGILASLVV) threads the bilayer. Positions 122–142 (SGQDGVPGTDDDIGNWTLSKK) are disordered.

It belongs to the GSP G family. As to quaternary structure, type II secretion system is composed of four main components: the outer membrane complex, the inner membrane complex, the cytoplasmic secretion ATPase and the periplasm-spanning pseudopilus. Forms homomultimers. In terms of processing, cleaved by the prepilin peptidase. Post-translationally, methylated by prepilin peptidase at the amino group of the N-terminal phenylalanine once the leader sequence is cleaved.

The protein resides in the cell inner membrane. Its function is as follows. Core component of the type II secretion system required for the energy-dependent secretion of extracellular factors such as proteases and toxins from the periplasm. Pseudopilin (pilin-like) protein that polymerizes to form the pseudopilus. Further polymerization triggers pseudopilus growth. This Klebsiella michiganensis (strain ATCC 8724 / DSM 4798 / JCM 20051 / NBRC 3318 / NRRL B-199 / KCTC 1686 / BUCSAV 143 / CCM 1901) protein is Type II secretion system core protein G.